The primary structure comprises 442 residues: DNA topoisomerase 6 subunit A3 (442 aa).

A disordered region spans residues 1-34; it reads MSEKKRRGGAGAGAASGSASKKPRVSTAASYAES. The region spanning 91 to 224 is the Topo IIA-type catalytic domain; it reads QDSASVTSRI…LHVVASEKGV (134 aa). The active-site O-(5'-phospho-DNA)-tyrosine intermediate is Y185. Mg(2+) contacts are provided by E271 and D323.

The protein belongs to the TOP6A family. Homodimer. Heterotetramer of two TOP6A and two TOP6B subunits. Interacts with TOP6B. The cofactor is Mg(2+). Highly expressed in flowers before pollination. Expressed in roots and shoots.

It localises to the nucleus. It catalyses the reaction ATP-dependent breakage, passage and rejoining of double-stranded DNA.. In terms of biological role, component of the DNA topoisomerase VI involved in chromatin organization and progression of endoreduplication cycles. Relaxes both positive and negative superturns and exhibits a strong decatenase activity. May be involved in cell proliferation and stress tolerance. This is DNA topoisomerase 6 subunit A3 from Oryza sativa subsp. indica (Rice).